A 197-amino-acid polypeptide reads, in one-letter code: Dephospho-CoA kinase (197 aa).

In terms of domain architecture, DPCK spans 2-197 (IIGITGGIAS…SALLLLANPR (196 aa)). 10-15 (ASGKST) is an ATP binding site.

This sequence belongs to the CoaE family.

It is found in the cytoplasm. The enzyme catalyses 3'-dephospho-CoA + ATP = ADP + CoA + H(+). It functions in the pathway cofactor biosynthesis; coenzyme A biosynthesis; CoA from (R)-pantothenate: step 5/5. Functionally, catalyzes the phosphorylation of the 3'-hydroxyl group of dephosphocoenzyme A to form coenzyme A. This is Dephospho-CoA kinase from Streptococcus pyogenes serotype M1.